The following is a 166-amino-acid chain: 3-hydroxyacyl-[acyl-carrier-protein] dehydratase FabZ (166 aa).

Histidine 72 is an active-site residue.

This sequence belongs to the thioester dehydratase family. FabZ subfamily.

The protein resides in the cytoplasm. The catalysed reaction is a (3R)-hydroxyacyl-[ACP] = a (2E)-enoyl-[ACP] + H2O. Its function is as follows. Involved in unsaturated fatty acids biosynthesis. Catalyzes the dehydration of short chain beta-hydroxyacyl-ACPs and long chain saturated and unsaturated beta-hydroxyacyl-ACPs. The sequence is that of 3-hydroxyacyl-[acyl-carrier-protein] dehydratase FabZ from Synechococcus sp. (strain JA-3-3Ab) (Cyanobacteria bacterium Yellowstone A-Prime).